The chain runs to 224 residues: Dickkopf-related protein 4 (224 aa).

An N-terminal signal peptide occupies residues 1-18; it reads MVAAVLLGLSWLCSPLGA. The DKK-type Cys-1 stretch occupies residues 41–90; the sequence is CLSDTDCNTRKFCLQPRDEKPFCATCRGLRRRCQRDAMCCPGTLCVNDVC. Residues 109 to 139 form a disordered region; that stretch reads GTHAEGTTGHPVQENQPKRKPSIKKSQGRKG. Residues 126–136 are compositionally biased toward basic residues; sequence KRKPSIKKSQG. 5 cysteine pairs are disulfide-bonded: Cys145–Cys157, Cys151–Cys166, Cys156–Cys194, Cys176–Cys202, and Cys196–Cys218. The interval 145–218 is DKK-type Cys-2; it reads CLRTFDCGPG…NRQHARLRVC (74 aa).

Belongs to the dickkopf family. In terms of assembly, interacts with LRP5 and LRP6. In terms of processing, appears to be not glycosylated. Post-translationally, can be proteolytically processed by a furin-like protease. In terms of tissue distribution, expressed in cerebellum, T-cells, esophagus and lung.

The protein resides in the secreted. Functionally, antagonizes canonical Wnt signaling by inhibiting LRP5/6 interaction with Wnt and by forming a ternary complex with the transmembrane protein KREMEN that promotes internalization of LRP5/6. DKKs play an important role in vertebrate development, where they locally inhibit Wnt regulated processes such as antero-posterior axial patterning, limb development, somitogenesis and eye formation. In the adult, Dkks are implicated in bone formation and bone disease, cancer and Alzheimer disease. The polypeptide is Dickkopf-related protein 4 (DKK4) (Homo sapiens (Human)).